Consider the following 611-residue polypeptide: Guanylate-binding protein 6 (611 aa).

Positions 1-308 are GTPase domain (Globular); the sequence is MTQPQMAPIC…NAINSGAVPC (308 aa). In terms of domain architecture, GB1/RHD3-type G spans 33–275; that stretch reads SQPVVVVAIV…FVSYIFTYAK (243 aa). GTP contacts are provided by residues 43-50, 65-67, and 95-99; these read GLYRTGKS, LGS, and DTEGL.

It belongs to the TRAFAC class dynamin-like GTPase superfamily. GB1/RHD3 GTPase family. GB1 subfamily.

The protein localises to the cytoplasmic vesicle. The catalysed reaction is GTP + H2O = GDP + phosphate + H(+). In terms of biological role, interferon (IFN)-inducible GTPase that plays important roles in innate immunity against a diverse range of bacterial, viral and protozoan pathogens, such as bacterial pathogens Listeria monocytogenes and Mycobacterium bovis BCG as well as the protozoan pathogen Toxoplasma gondii. Confers protection to several pathogens, including the bacterial pathogens Listeria monocytogenes and Mycobacterium bovis BCG as well as the protozoan pathogen Toxoplasma gondii. The polypeptide is Guanylate-binding protein 6 (Gbp6) (Mus musculus (Mouse)).